A 41-amino-acid chain; its full sequence is Large ribosomal subunit protein bL36 (41 aa).

It belongs to the bacterial ribosomal protein bL36 family.

In Dinoroseobacter shibae (strain DSM 16493 / NCIMB 14021 / DFL 12), this protein is Large ribosomal subunit protein bL36.